Here is a 138-residue protein sequence, read N- to C-terminus: Small ribosomal subunit protein uS8 (138 aa).

This sequence belongs to the universal ribosomal protein uS8 family. In terms of assembly, part of the 30S ribosomal subunit. Contacts proteins S5 and S12.

Its function is as follows. One of the primary rRNA binding proteins, it binds directly to 16S rRNA central domain where it helps coordinate assembly of the platform of the 30S subunit. In Thermus aquaticus, this protein is Small ribosomal subunit protein uS8.